The sequence spans 219 residues: Ran-binding protein 1 homolog c (219 aa).

Over residues 1–11 (MASTEPERENR) the composition is skewed to basic and acidic residues. Disordered stretches follow at residues 1 to 30 (MAST…VAPI) and 160 to 219 (QVGK…EAST). Over residues 12–23 (EDETEVNEDEDT) the composition is skewed to acidic residues. Residues 26-161 (QVAPIVRLEE…FTEIAESQQV (136 aa)) form the RanBD1 domain. Basic and acidic residues predominate over residues 185-219 (SEEKAKEAEEKEPAKEDKETKKEKVEEEKKTEAST).

Its subcellular location is the nucleus. The protein localises to the nuclear pore complex. This chain is Ran-binding protein 1 homolog c (RANBP1C), found in Arabidopsis thaliana (Mouse-ear cress).